The primary structure comprises 270 residues: Putative pyruvate, phosphate dikinase regulatory protein 2 (270 aa).

An ADP-binding site is contributed by 151-158; the sequence is GVSRTSKT.

It belongs to the pyruvate, phosphate/water dikinase regulatory protein family. PDRP subfamily.

The enzyme catalyses N(tele)-phospho-L-histidyl/L-threonyl-[pyruvate, phosphate dikinase] + ADP = N(tele)-phospho-L-histidyl/O-phospho-L-threonyl-[pyruvate, phosphate dikinase] + AMP + H(+). It carries out the reaction N(tele)-phospho-L-histidyl/O-phospho-L-threonyl-[pyruvate, phosphate dikinase] + phosphate + H(+) = N(tele)-phospho-L-histidyl/L-threonyl-[pyruvate, phosphate dikinase] + diphosphate. Functionally, bifunctional serine/threonine kinase and phosphorylase involved in the regulation of the pyruvate, phosphate dikinase (PPDK) by catalyzing its phosphorylation/dephosphorylation. This chain is Putative pyruvate, phosphate dikinase regulatory protein 2, found in Listeria innocua serovar 6a (strain ATCC BAA-680 / CLIP 11262).